The chain runs to 403 residues: Enoyl-[acyl-carrier-protein] reductase [NADH] (403 aa).

NAD(+) contacts are provided by residues 49-54 (GASSGY), 75-76 (FE), 112-113 (DA), and 141-142 (LA). A substrate-binding site is contributed by tyrosine 227. Tyrosine 237 acts as the Proton donor in catalysis. NAD(+) contacts are provided by residues lysine 246 and 276–278 (VVT).

This sequence belongs to the TER reductase family. Monomer.

It catalyses the reaction a 2,3-saturated acyl-[ACP] + NAD(+) = a (2E)-enoyl-[ACP] + NADH + H(+). Its pathway is lipid metabolism; fatty acid biosynthesis. Functionally, involved in the final reduction of the elongation cycle of fatty acid synthesis (FAS II). Catalyzes the reduction of a carbon-carbon double bond in an enoyl moiety that is covalently linked to an acyl carrier protein (ACP). This Pseudomonas putida (strain ATCC 47054 / DSM 6125 / CFBP 8728 / NCIMB 11950 / KT2440) protein is Enoyl-[acyl-carrier-protein] reductase [NADH].